The following is a 253-amino-acid chain: MDNRFATAFVIACVLSLISTIYMAASIGTDFWYEYRSPVQENSSDLNKSIWDEFISDEADEKTYNDALFRYNGTVGLWRRCITIPKNMHWYSPPERTESFDVVTKCVSFTLTEQFMEKFVDPGNHNSGIDLLRTYLWRCQFLLPFVSLGLMCFGALIGLCACICRSLYPTIATGILHLLAGLCTLGSVSCYVAGIELLHQKLELPDNVSGEFGWSFCLACVSAPLQFMASALFIWAAHTNRKEYTLMKAYRVA.

Residues 5–25 traverse the membrane as a helical segment; it reads FATAFVIACVLSLISTIYMAA. Residues asparagine 42 and asparagine 72 are each glycosylated (N-linked (GlcNAc...) asparagine). 3 helical membrane passes run 141–161, 175–195, and 216–236; these read FLLP…GLCA, ILHL…VAGI, and FCLA…FIWA.

Belongs to the PMP-22/EMP/MP20 family. As to expression, widely distributed in the adult CNS with highest expression in the corpus callosum, caudate nucleus, cerebral cortex, medulla, putamen, spinal cord, substantia nigra and subthalamic nucleus. Weak expression was detected in the adult heart.

The protein resides in the cell junction. It localises to the tight junction. The protein localises to the cell membrane. Plays a role in negatively regulating the permeability of cells to small molecules. This chain is Claudin domain-containing protein 1 (CLDND1), found in Homo sapiens (Human).